A 708-amino-acid chain; its full sequence is WD repeat-containing and planar cell polarity effector protein fritz homolog (708 aa).

WD repeat units follow at residues 303-342 (PLRS…TLLA) and 343-382 (QADL…IRAQ).

This sequence belongs to the WD repeat fritz family. Interacts with sept2-a. Interacts with intu and fuz; fuz, intu and wdpcp probably form the core CPLANE (ciliogenesis and planar polarity effectors) complex.

It is found in the cell membrane. The protein resides in the cytoplasm. It localises to the cytoskeleton. The protein localises to the cilium axoneme. Its subcellular location is the cilium basal body. In terms of biological role, probable effector of the planar cell polarity signaling pathway which regulates the septin cytoskeleton in both ciliogenesis and collective cell movements including covergent extension during gastrulation. Controls cell shape but not polarization during convergent extension. Proposed to function as core component of the CPLANE (ciliogenesis and planar polarity effectors) complex involved in the recruitment of peripheral IFT-A proteins to basal bodies. The chain is WD repeat-containing and planar cell polarity effector protein fritz homolog (wdpcp) from Xenopus laevis (African clawed frog).